The sequence spans 159 residues: Ribosomal RNA large subunit methyltransferase H (159 aa).

S-adenosyl-L-methionine contacts are provided by residues Leu-76, Gly-108, and 127 to 132 (FSKMTF).

The protein belongs to the RNA methyltransferase RlmH family. In terms of assembly, homodimer.

The protein resides in the cytoplasm. It catalyses the reaction pseudouridine(1915) in 23S rRNA + S-adenosyl-L-methionine = N(3)-methylpseudouridine(1915) in 23S rRNA + S-adenosyl-L-homocysteine + H(+). Specifically methylates the pseudouridine at position 1915 (m3Psi1915) in 23S rRNA. The chain is Ribosomal RNA large subunit methyltransferase H from Staphylococcus haemolyticus (strain JCSC1435).